A 187-amino-acid polypeptide reads, in one-letter code: MSEYKNALPRLHQRYEDVLKKQLREQFGYANELQVPKLEKIVLNMGVGEAAGDQKKLDAAVAEMTVISGQKPVKTLARKAIAGFKIREGLPIGCKVTLRRARMYEFLDRLVTIAMPRIRDFRGLPANKGFDGHGNFAMGIKEQIVFPEIEYDKIDAVRGMDIIFVTSAKSDAEAKALLKAFDLPFNG.

This sequence belongs to the universal ribosomal protein uL5 family. As to quaternary structure, part of the 50S ribosomal subunit; part of the 5S rRNA/L5/L18/L25 subcomplex. Contacts the 5S rRNA and the P site tRNA. Forms a bridge to the 30S subunit in the 70S ribosome.

Functionally, this is one of the proteins that bind and probably mediate the attachment of the 5S RNA into the large ribosomal subunit, where it forms part of the central protuberance. In the 70S ribosome it contacts protein S13 of the 30S subunit (bridge B1b), connecting the 2 subunits; this bridge is implicated in subunit movement. Contacts the P site tRNA; the 5S rRNA and some of its associated proteins might help stabilize positioning of ribosome-bound tRNAs. This Gluconobacter oxydans (strain 621H) (Gluconobacter suboxydans) protein is Large ribosomal subunit protein uL5.